Consider the following 285-residue polypeptide: Hypersensitive-induced reaction 1 protein (285 aa).

The N-myristoyl glycine moiety is linked to residue G2. Residues 118 to 190 are a coiled coil; it reads FEQKNEIAKS…EKILQIKRAE (73 aa).

As to quaternary structure, homo- and heterodimer. Interacts with LRR1 (via LRR domain). As to expression, constitutively expressed in stems, roots and flowers, but not in leaves and fruits.

Positive regulator of hypersensitive response (HR)-like cell death. May be involved in potassium ion channel regulation. This chain is Hypersensitive-induced reaction 1 protein, found in Capsicum annuum (Capsicum pepper).